A 216-amino-acid chain; its full sequence is Transmembrane emp24 domain-containing protein eca (216 aa).

Positions 1–20 (MRNQFICVALLLCALNSACG) are cleaved as a signal peptide. Topologically, residues 21 to 183 (LYFHISETER…RHTSESTNSR (163 aa)) are lumenal. The GOLD domain maps to 30 to 126 (RKCFIEEVPD…QLRVHLDIQV (97 aa)). Residues 134–164 (ANVAQKEKLTELQLRIRQLLDQVDQITKEQN) are a coiled coil. Residues 184 to 203 (VLWWSLAQTVVLVCMGFWQM) form a helical membrane-spanning segment. The Cytoplasmic segment spans residues 204 to 216 (RHLKSFFEAKKLV). Residues 213–216 (KKLV) carry the Prevents secretion from ER motif.

This sequence belongs to the EMP24/GP25L family.

Its subcellular location is the endoplasmic reticulum membrane. In terms of biological role, eca and bai are essential, though not redundant, for dorsoventral patterning of the embryo. Specifically required during early embryogenesis for the activity of maternal tkv, while the zygotic tkv is not affected. Involved in Golgi organization. The polypeptide is Transmembrane emp24 domain-containing protein eca (Drosophila willistoni (Fruit fly)).